Consider the following 82-residue polypeptide: NAD(P)H-quinone oxidoreductase subunit O (82 aa).

It belongs to the complex I NdhO subunit family. NDH-1 can be composed of about 15 different subunits; different subcomplexes with different compositions have been identified which probably have different functions.

It is found in the cellular thylakoid membrane. It catalyses the reaction a plastoquinone + NADH + (n+1) H(+)(in) = a plastoquinol + NAD(+) + n H(+)(out). The enzyme catalyses a plastoquinone + NADPH + (n+1) H(+)(in) = a plastoquinol + NADP(+) + n H(+)(out). Its function is as follows. NDH-1 shuttles electrons from an unknown electron donor, via FMN and iron-sulfur (Fe-S) centers, to quinones in the respiratory and/or the photosynthetic chain. The immediate electron acceptor for the enzyme in this species is believed to be plastoquinone. Couples the redox reaction to proton translocation, and thus conserves the redox energy in a proton gradient. Cyanobacterial NDH-1 also plays a role in inorganic carbon-concentration. In Prochlorococcus marinus (strain MIT 9211), this protein is NAD(P)H-quinone oxidoreductase subunit O.